A 440-amino-acid polypeptide reads, in one-letter code: Gap junction gamma-2 protein (440 aa).

The Cytoplasmic portion of the chain corresponds to 1–21 (MTNMSWSFLTRLLEEIHNHST). A helical membrane pass occupies residues 22–42 (FVGKVWLTVLVVFRIVLTAVG). Over 43–78 (GESIYSDEQSKFTCNTRQPGCDNVCYDAFAPLSHVR) the chain is Extracellular. A helical membrane pass occupies residues 79 to 99 (FWVFQIVVISTPSVMYLGYAV). Over 100 to 223 (HRLARASEQE…AQLVVRAAFE (124 aa)) the chain is Cytoplasmic. A disordered region spans residues 108–199 (QERRRALRRR…TPGPAGQHDG (92 aa)). Positions 112–124 (RALRRRPGTRRLP) are enriched in basic residues. Low complexity predominate over residues 136 to 149 (PDTTDLGEAEPILA). A compositionally biased stretch (acidic residues) spans 150–173 (LEEDEDEEPGAPEGPGEDTEEERA). A helical membrane pass occupies residues 224 to 244 (VAFLVGQYLLYGFEVPPFFAC). The Extracellular segment spans residues 245–264 (SRQPCPHVVDCFVSRPTEKT). The helical transmembrane segment at 265-285 (VFLLVMYVVSCLCLLLNLCEM) threads the bilayer. The Cytoplasmic portion of the chain corresponds to 286–440 (AHLGLGSAQD…SRDGKATVWI (155 aa)). The interval 369 to 440 (DRDSPPCAGL…SRDGKATVWI (72 aa)) is disordered. Phosphoserine is present on Ser-372. Over residues 388–401 (VGGLASGTGSATSG) the composition is skewed to low complexity.

It belongs to the connexin family. Gamma-type subfamily. A connexon is composed of a hexamer of connexins. Interacts with TJP1. Mainly expressed by oligodendrocytes in the central nervous system (at protein level).

It localises to the cell membrane. The protein localises to the cell junction. Its subcellular location is the gap junction. In terms of biological role, one gap junction consists of a cluster of closely packed pairs of transmembrane channels, the connexons, through which materials of low MW diffuse from one cell to a neighboring cell. May play a role in myelination in central and peripheral nervous systems. The protein is Gap junction gamma-2 protein (Gjc2) of Mus musculus (Mouse).